We begin with the raw amino-acid sequence, 1776 residues long: TOG array regulator of axonemal microtubules protein 1 (1776 aa).

2 TOG regions span residues E94–E311 and P351–S595. 8 HEAT repeats span residues A175–G212, V214–L246, L250–Q288, N344–P383, A389–E426, Q430–V465, G466–E503, and F505–S542. 4 disordered regions span residues K655–S676, I817–N921, H970–D1000, and T1062–R1084. 3 stretches are compositionally biased toward polar residues: residues P826–L836, D845–P855, and L871–Q892. Residues S988–D1000 are compositionally biased toward low complexity. The TOG 3 stretch occupies residues D1259–R1481. 2 HEAT repeats span residues T1297–K1334 and Q1338–P1375. Residues A1493 to A1536 are disordered. Residues R1509–S1520 show a composition bias toward low complexity. The segment covering S1521–R1533 has biased composition (basic and acidic residues). The TOG 4 stretch occupies residues S1540–L1776. HEAT repeat units follow at residues L1541–E1578, G1582–D1619, and P1623–N1661.

Belongs to the Crescerin family. Interacts with ARMC9. Interacts with CCDC66, CEP104 and CSPP1.

It localises to the cell projection. Its subcellular location is the cilium. The protein localises to the cytoplasm. The protein resides in the cytoskeleton. It is found in the cilium axoneme. In terms of biological role, involved in ciliogenesis. It is required for appropriate acetylation and polyglutamylation of ciliary microtubules, and regulation of cilium length. Interacts with microtubules and promotes microtubule polymerization via its HEAT repeat domains, especially those in TOG region 2 and 4. This is TOG array regulator of axonemal microtubules protein 1 (Togaram1) from Mus musculus (Mouse).